The chain runs to 274 residues: Copper chaperone for superoxide dismutase (274 aa).

Positions 11–74 (MCALEFTVQM…LLESTGRQAV (64 aa)) constitute an HMA domain. Cu cation is bound by residues C22 and C25. A Glycyl lysine isopeptide (Lys-Gly) (interchain with G-Cter in ubiquitin) cross-link involves residue K76. Residues 88–234 (AAVAIMEGSG…LACGIIARSA (147 aa)) are superoxide dismutase-like. C141 and C227 are joined by a disulfide. Residues H147, H155, H164, and D167 each contribute to the Zn(2+) site. Glycyl lysine isopeptide (Lys-Gly) (interchain with G-Cter in ubiquitin) cross-links involve residues K189, K216, and K241. Cu cation-binding residues include C244 and C246. S267 is modified (phosphoserine).

This sequence in the C-terminal section; belongs to the Cu-Zn superoxide dismutase family. As to quaternary structure, homodimer, and heterodimer with SOD1. Interacts with COMMD1. Interacts with XIAP/BIRC4. Interacts with SLC31A1(via C-terminal domain); this interaction is Cu(1+)-mediated. The heterodimer CCS:SOD1 interacts with SLC31A1; this heterotrimer is Cu(1+)-mediated and its maintenance is regulated through SOD1 activation. Cu(2+) serves as cofactor. It depends on Zn(2+) as a cofactor. In terms of processing, ubiquitinion by XIAP/BIRC4 leads to enhancement of its chaperone activity toward its physiologic target, SOD1, rather than proteasomal degradation. XIAP/BIRC4 preferentially ubiquitinates at Lys-241.

It localises to the cytoplasm. Its function is as follows. Delivers copper to copper zinc superoxide dismutase (SOD1). This Rattus norvegicus (Rat) protein is Copper chaperone for superoxide dismutase.